The chain runs to 482 residues: uncharacterized protein (482 aa).

A DWNN domain is found at 5–79 (IYYKFKSQKD…STSVIVRRVP (75 aa)). The interval 86–108 (GTAARYVSGAPKTTGARSDSVKR) is disordered. The segment at 183–200 (YICYRCGQKGHWIQACPT) adopts a CCHC-type zinc-finger fold. The RING-type; degenerate zinc-finger motif lies at 282 to 322 (CTLCKKLARNACRTPCCDKLFCEECIQTALLDSDFECPNCH). Disordered stretches follow at residues 346–393 (KSVL…SSAV) and 447–482 (QVYHNNRNPPRTNSRPSNASVPPPSSLHKNPPTKTN). The span at 451 to 466 (NNRNPPRTNSRPSNAS) shows a compositional bias: low complexity.

It is found in the nucleus. This is an uncharacterized protein from Schizosaccharomyces pombe (strain 972 / ATCC 24843) (Fission yeast).